The sequence spans 325 residues: MSAAIAATARPAAEMRTRALYDLPLPELMFRAQAVHRAHFDACSVETAQLLSIKTGGCPEDCGYCSQSAHHDTGVAATRLMDVEAVLAEARKAKAAGAARFCMGAAWRAPKDRDMDAVCAMISGVRALGLETCVTLGMLTPAQVDRLSAAGLDYYNHNVDTSPAYYPRITSTRTLDDRLETLGHVRAGGIKVCCGGIVGMGETIEDRLAMLELLAGLDPHPESVPLNMWTPIDGTPVKAFEEKVDPIAFVRLVAVARLLMPRSVVRLSAGRHTLSDEAQALCFLAGANSIFVGDTLLTTPNMEESRDAVLLARLGLRPAPAQPSA.

Residues 43-262 (CSVETAQLLS…VAVARLLMPR (220 aa)) form the Radical SAM core domain. Residues C58, C62, and C65 each coordinate [4Fe-4S] cluster. Residues C102, C133, C193, and R266 each contribute to the [2Fe-2S] cluster site.

It belongs to the radical SAM superfamily. Biotin synthase family. As to quaternary structure, homodimer. [4Fe-4S] cluster is required as a cofactor. It depends on [2Fe-2S] cluster as a cofactor.

It catalyses the reaction (4R,5S)-dethiobiotin + (sulfur carrier)-SH + 2 reduced [2Fe-2S]-[ferredoxin] + 2 S-adenosyl-L-methionine = (sulfur carrier)-H + biotin + 2 5'-deoxyadenosine + 2 L-methionine + 2 oxidized [2Fe-2S]-[ferredoxin]. Its pathway is cofactor biosynthesis; biotin biosynthesis; biotin from 7,8-diaminononanoate: step 2/2. Functionally, catalyzes the conversion of dethiobiotin (DTB) to biotin by the insertion of a sulfur atom into dethiobiotin via a radical-based mechanism. This Azorhizobium caulinodans (strain ATCC 43989 / DSM 5975 / JCM 20966 / LMG 6465 / NBRC 14845 / NCIMB 13405 / ORS 571) protein is Biotin synthase.